The sequence spans 205 residues: Probable GTP-binding protein EngB (205 aa).

The EngB-type G domain occupies 29-203; that stretch reads QGAEIAFIGR…KAVLSQWFRS (175 aa). GTP is bound by residues 37 to 44, 64 to 68, 82 to 85, 149 to 152, and 182 to 184; these read GRSNAGKS, GRTQM, DLPG, TKSD, and FSS. 2 residues coordinate Mg(2+): Ser44 and Thr66.

It belongs to the TRAFAC class TrmE-Era-EngA-EngB-Septin-like GTPase superfamily. EngB GTPase family. It depends on Mg(2+) as a cofactor.

In terms of biological role, necessary for normal cell division and for the maintenance of normal septation. The chain is Probable GTP-binding protein EngB from Coxiella burnetii (strain RSA 331 / Henzerling II).